Here is a 203-residue protein sequence, read N- to C-terminus: MLTEQQRRELDWEKTDGLMPVIVQHAVSGEVLMLGYMNPEALDKTIESGKVTFFSRTKQRLWIKGETSGNFLNVVSIAPDCDNDTLLVLANPIGPTCHKGTSSCFGNTAHQWLFLYQLEQLLAERKYADPETSYTAKLYASGTKRIAQKVGEEGVETALAATVHDRFELTNEASDLMYHLLVLLQDQDLDLTTVIENLHKRHQ.

Residues 1 to 114 form a phosphoribosyl-AMP cyclohydrolase region; the sequence is MLTEQQRREL…FGNTAHQWLF (114 aa). Positions 115 to 203 are phosphoribosyl-ATP pyrophosphohydrolase; it reads LYQLEQLLAE…VIENLHKRHQ (89 aa).

In the N-terminal section; belongs to the PRA-CH family. The protein in the C-terminal section; belongs to the PRA-PH family.

Its subcellular location is the cytoplasm. It carries out the reaction 1-(5-phospho-beta-D-ribosyl)-ATP + H2O = 1-(5-phospho-beta-D-ribosyl)-5'-AMP + diphosphate + H(+). It catalyses the reaction 1-(5-phospho-beta-D-ribosyl)-5'-AMP + H2O = 1-(5-phospho-beta-D-ribosyl)-5-[(5-phospho-beta-D-ribosylamino)methylideneamino]imidazole-4-carboxamide. It participates in amino-acid biosynthesis; L-histidine biosynthesis; L-histidine from 5-phospho-alpha-D-ribose 1-diphosphate: step 2/9. The protein operates within amino-acid biosynthesis; L-histidine biosynthesis; L-histidine from 5-phospho-alpha-D-ribose 1-diphosphate: step 3/9. This chain is Histidine biosynthesis bifunctional protein HisIE (hisI), found in Shigella flexneri.